Consider the following 205-residue polypeptide: Holliday junction resolvase RecU (205 aa).

The segment at 1–22 is disordered; it reads MAINYPAGTRRRTAQAKNTMRT. Residues threonine 90, aspartate 92, aspartate 105, and glutamine 124 each contribute to the Mg(2+) site.

Belongs to the RecU family. It depends on Mg(2+) as a cofactor.

The protein resides in the cytoplasm. It catalyses the reaction Endonucleolytic cleavage at a junction such as a reciprocal single-stranded crossover between two homologous DNA duplexes (Holliday junction).. Functionally, endonuclease that resolves Holliday junction intermediates in genetic recombination. Cleaves mobile four-strand junctions by introducing symmetrical nicks in paired strands. Promotes annealing of linear ssDNA with homologous dsDNA. Required for DNA repair, homologous recombination and chromosome segregation. The polypeptide is Holliday junction resolvase RecU (Leuconostoc citreum (strain KM20)).